The following is a 213-amino-acid chain: ABA-inducible protein PHV A1 (213 aa).

Disordered stretches follow at residues 1–158 (MASN…KDKT) and 182–213 (NTLG…TRNH). A compositionally biased stretch (basic and acidic residues) spans 13 to 23 (GETKARTEEKT). 9 LEA 11-mer repeat repeats span residues 27–37 (MGATKQKAGQT), 38–48 (TEATKQKAGET), 49–59 (AEATKQKTGET), 60–70 (AEAAKQKAAEA), 78–88 (AQAAKDKTYET), 89–99 (AQAAKERAAQG), 111–121 (TEAAKQKAAET), 122–132 (TEAAKQKAAEA), and 133–143 (TEAAKQKASDT). Residues 27-143 (MGATKQKAGQ…EAAKQKASDT (117 aa)) are 11 X 11 AA tandem repeats of T-E-A-A-K-Q-K-A-A-E-T. Basic and acidic residues-rich tracts occupy residues 41-74 (TKQK…KDKT), 81-98 (AKDK…RAAQ), and 109-140 (EKTE…KQKA). The span at 193 to 213 (ATKDATTGATVKDTTTTTRNH) shows a compositional bias: low complexity.

It belongs to the LEA type 4 family.

This chain is ABA-inducible protein PHV A1 (HVA1), found in Hordeum vulgare (Barley).